The primary structure comprises 255 residues: ATP-dependent L-serine kinase (255 aa).

Glu-36 is a catalytic residue. Val-74 is a binding site for O-phospho-L-serine. Asp-75 serves as a coordination point for Mg(2+). O-phospho-L-serine-binding residues include Gly-76, His-77, His-78, Trp-108, Lys-234, Thr-236, and His-238.

Belongs to the SerK family. Requires Mg(2+) as cofactor.

It carries out the reaction L-serine + ATP = O-phospho-L-serine + ADP + H(+). Free serine kinase that uses ATP to phosphorylate L-serine to yield O-phospho-L-serine and ADP. The chain is ATP-dependent L-serine kinase from Desulfurococcus mucosus (strain ATCC 35584 / DSM 2162 / JCM 9187 / O7/1).